The primary structure comprises 305 residues: uncharacterized protein (305 aa).

Belongs to the IIV-6 436R family.

This is an uncharacterized protein from Acheta domesticus (House cricket).